The primary structure comprises 517 residues: Rop guanine nucleotide exchange factor 9 (517 aa).

Disordered stretches follow at residues 16-76 (NLDR…SETE) and 428-517 (GEET…KDRH). Over residues 39-63 (MPESQTQDSLGGSPVETSRPMTSRL) the composition is skewed to polar residues. In terms of domain architecture, PRONE spans 65–429 (SRRQDKQQSE…SLARKQCTGE (365 aa)). Over residues 66-76 (RRQDKQQSETE) the composition is skewed to basic and acidic residues. A compositionally biased stretch (polar residues) spans 440–452 (ETDSASAGSSNYS).

As to quaternary structure, interacts with ARAC11/ROP1 and ARAC10/ROP11. Interacts with PRK6. As to expression, expressed in pollen grains and pollen tubes.

It is found in the cell membrane. In terms of biological role, guanine-nucleotide exchange factor (GEF) that acts as an activator of Rop (Rho of plants) GTPases by promoting the exchange of GDP for GTP. The protein is Rop guanine nucleotide exchange factor 9 of Arabidopsis thaliana (Mouse-ear cress).